A 153-amino-acid polypeptide reads, in one-letter code: Probable succinate transporter subunit YjjB (153 aa).

The next 4 helical transmembrane spans lie at 7 to 27, 51 to 71, 83 to 103, and 125 to 145; these read WALLQDMVLAAIPALGFAMVF, MIHFGMNIELASLVASIMIGI, VFTVAAVIPMFPGISAYTAMI, and FLKASFIVGALSIGLSLPGLW.

It belongs to the ThrE exporter (TC 2.A.79) family. In terms of assembly, the transporter is composed of YjjB and YjjP.

It is found in the cell inner membrane. Involved in succinate export with YjjP. Both proteins are required for export. The sequence is that of Probable succinate transporter subunit YjjB from Yersinia pestis bv. Antiqua (strain Antiqua).